Consider the following 456-residue polypeptide: CBL-interacting protein kinase 16 (456 aa).

The Protein kinase domain occupies 22–277 (YELGRLLGQG…IPEIMRTPWF (256 aa)). Residues 28–36 (LGQGTFAKV) and lysine 51 each bind ATP. Catalysis depends on aspartate 145, which acts as the Proton acceptor. Residues 163–192 (DFGLAALPEQLRQDGLLHTQCGTPAYVAPE) are activation loop. One can recognise an NAF domain in the interval 309–335 (AMSPRTCNAFQLISSMSSGFDLSGMFE). The tract at residues 339–368 (KAATVFTSRAPAATVIQKLEAVGRSLGYSA) is PPI.

The protein belongs to the protein kinase superfamily. CAMK Ser/Thr protein kinase family. SNF1 subfamily. Requires Mn(2+) as cofactor.

It catalyses the reaction L-seryl-[protein] + ATP = O-phospho-L-seryl-[protein] + ADP + H(+). It carries out the reaction L-threonyl-[protein] + ATP = O-phospho-L-threonyl-[protein] + ADP + H(+). In terms of biological role, CIPK serine-threonine protein kinases interact with CBL proteins. Binding of a CBL protein to the regulatory NAF domain of CIPK protein lead to the activation of the kinase in a calcium-dependent manner. The sequence is that of CBL-interacting protein kinase 16 (CIPK16) from Oryza sativa subsp. japonica (Rice).